Consider the following 378-residue polypeptide: Ribosomal RNA large subunit methyltransferase G (378 aa).

Belongs to the methyltransferase superfamily. RlmG family.

The protein resides in the cytoplasm. The enzyme catalyses guanosine(1835) in 23S rRNA + S-adenosyl-L-methionine = N(2)-methylguanosine(1835) in 23S rRNA + S-adenosyl-L-homocysteine + H(+). In terms of biological role, specifically methylates the guanine in position 1835 (m2G1835) of 23S rRNA. The protein is Ribosomal RNA large subunit methyltransferase G of Shigella boydii serotype 4 (strain Sb227).